Reading from the N-terminus, the 187-residue chain is dCTP deaminase (187 aa).

DCTP-binding positions include 110–115 (KSTYAR), 134–136 (TLE), Gln-155, Tyr-169, and Gln-179. Glu-136 (proton donor/acceptor) is an active-site residue.

This sequence belongs to the dCTP deaminase family. In terms of assembly, homotrimer.

It carries out the reaction dCTP + H2O + H(+) = dUTP + NH4(+). The protein operates within pyrimidine metabolism; dUMP biosynthesis; dUMP from dCTP (dUTP route): step 1/2. Functionally, catalyzes the deamination of dCTP to dUTP. The sequence is that of dCTP deaminase from Bordetella petrii (strain ATCC BAA-461 / DSM 12804 / CCUG 43448).